Here is a 434-residue protein sequence, read N- to C-terminus: Putative polysaccharide biosynthesis protein with aminopeptidase-like domain (434 aa).

Aminopeptidase-like regions lie at residues 1–55 (MEEI…IHEV) and 57–355 (SGTK…IENN). Residues 56-164 (KSGTKVFDWT…VVIDSSLEDG (109 aa)) form an insert region. Zn(2+) is bound by residues H189, D195, and H324. The permutated winged helix-turn-helix stretch occupies residues 356–434 (RTYLNLNPKC…LYRVELLKLV (79 aa)).

Belongs to the UPF0770 family. In terms of assembly, homotrimer. The cofactor is Zn(2+).

Functionally, the genomic context suggests a role in the biosynthesis of modified polysaccharides; this association with genes involved in carbohydrate metabolism is observed in several phylogenetically distinct taxa. Is not expected to have peptidase activity despite low similarity to aminopeptidases. The sequence is that of Putative polysaccharide biosynthesis protein with aminopeptidase-like domain from Clostridium acetobutylicum (strain ATCC 824 / DSM 792 / JCM 1419 / IAM 19013 / LMG 5710 / NBRC 13948 / NRRL B-527 / VKM B-1787 / 2291 / W).